The following is a 214-amino-acid chain: A-type ATP synthase subunit D (214 aa).

It belongs to the V-ATPase D subunit family. As to quaternary structure, has multiple subunits with at least A(3), B(3), C, D, E, F, H, I and proteolipid K(x).

It is found in the cell membrane. Its function is as follows. Component of the A-type ATP synthase that produces ATP from ADP in the presence of a proton gradient across the membrane. The polypeptide is A-type ATP synthase subunit D (Methanosphaera stadtmanae (strain ATCC 43021 / DSM 3091 / JCM 11832 / MCB-3)).